A 100-amino-acid polypeptide reads, in one-letter code: Small ribosomal subunit protein uS14c (100 aa).

The protein belongs to the universal ribosomal protein uS14 family. In terms of assembly, part of the 30S ribosomal subunit.

It localises to the plastid. The protein localises to the chloroplast. Binds 16S rRNA, required for the assembly of 30S particles. The sequence is that of Small ribosomal subunit protein uS14c from Tetradesmus obliquus (Green alga).